Here is a 404-residue protein sequence, read N- to C-terminus: Argininosuccinate synthase (404 aa).

ATP-binding positions include 10–18 (AFSGGLDTS) and Ala-37. L-citrulline contacts are provided by Tyr-88 and Ser-93. Residue Gly-118 participates in ATP binding. Residues Thr-120, Asn-124, and Asp-125 each coordinate L-aspartate. An L-citrulline-binding site is contributed by Asn-124. L-citrulline contacts are provided by Arg-128, Ser-179, Ser-188, Glu-264, and Tyr-276.

This sequence belongs to the argininosuccinate synthase family. Type 1 subfamily. In terms of assembly, homotetramer.

The protein localises to the cytoplasm. It carries out the reaction L-citrulline + L-aspartate + ATP = 2-(N(omega)-L-arginino)succinate + AMP + diphosphate + H(+). It participates in amino-acid biosynthesis; L-arginine biosynthesis; L-arginine from L-ornithine and carbamoyl phosphate: step 2/3. The protein is Argininosuccinate synthase of Nitrosomonas europaea (strain ATCC 19718 / CIP 103999 / KCTC 2705 / NBRC 14298).